A 279-amino-acid polypeptide reads, in one-letter code: Prepilin leader peptidase/N-methyltransferase (279 aa).

The Periplasmic segment spans residues 1 to 16; sequence MDDLREFAQLFPAWWF. Residues 17-35 form a helical membrane-spanning segment; sequence GALGVLGLIVGSFLNVVIY. The Cytoplasmic portion of the chain corresponds to 36–104; sequence RLPIMLERRW…RSRCCHQSVS (69 aa). The chain crosses the membrane as a helical span at residues 105-123; it reads VQYPLVEVITMLAFLAAGL. The Periplasmic portion of the chain corresponds to 124–130; it reads LWLPGMA. Residues 131–149 form a helical membrane-spanning segment; sequence LWGALILLSFLLVLTVIDI. Over 150–163 the chain is Cytoplasmic; it reads KTLLLPDELTLSLL. The helical transmembrane segment at 164–182 threads the bilayer; the sequence is WMGLLFNLSGTFVSLNDAV. Topologically, residues 183-185 are periplasmic; sequence VGA. Residues 186–204 form a helical membrane-spanning segment; sequence MAGYLSLWLLYWAFKYATG. The Cytoplasmic segment spans residues 205–214; that stretch reads KEALGYGDFK. Residues 215-233 traverse the membrane as a helical segment; it reads LLAALGAWLGWQALPNLVL. Topologically, residues 234–236 are periplasmic; the sequence is VAA. A helical transmembrane segment spans residues 237-254; it reads LSGLVVTLIWRGLRKEDT. Residues 255–257 lie on the Cytoplasmic side of the membrane; it reads AKP. Residues 258–276 form a helical membrane-spanning segment; it reads LAFGPWLAIGGVFGMIMNG. The Periplasmic segment spans residues 277-279; sequence FNL.

It belongs to the peptidase A24 family.

Its subcellular location is the cell inner membrane. It catalyses the reaction Typically cleaves a -Gly-|-Phe- bond to release an N-terminal, basic peptide of 5-8 residues from type IV prepilin, and then N-methylates the new N-terminal amino group, the methyl donor being S-adenosyl-L-methionine.. Functionally, plays a role in type II pseudopili formation by proteolytically removing the leader sequence from substrate proteins and subsequently monomethylating the alpha-amino group of the newly exposed N-terminal phenylalanine. Substrates include proteins required for biogenesis of the type II general secretory apparatus. This is Prepilin leader peptidase/N-methyltransferase (outO) from Pectobacterium carotovorum subsp. carotovorum (Erwinia carotovora subsp. carotovora).